Reading from the N-terminus, the 574-residue chain is Cytochrome P450 306a1 (574 aa).

The span at 303-314 (EKEQLRQSKEAD) shows a compositional bias: basic and acidic residues. The interval 303-333 (EKEQLRQSKEADPSQEQSEADEDDEESDEED) is disordered. Over residues 320–333 (SEADEDDEESDEED) the composition is skewed to acidic residues. Cys505 provides a ligand contact to heme.

This sequence belongs to the cytochrome P450 family. Heme serves as cofactor. First seen at the early (syncytial) blastoderm stage 4. During cellularization of the blastoderm (stage 5), stripes of expression appear and remain through to stage 10. Expression becomes undetectable during germ band retraction (stages 11-14). By stage 15, some expression resumes in the primordium of the ring gland, so that by stage 17 strong expression is seen, but only in the ring gland. This specific localization continues throughout the larval instars (at protein level). Expressed in the prothoracic gland cells of the larval ring gland (RG). Levels decline just after the molt to the third instar then increase later during the wandering stage. Low levels of expression are seen in the larval brain and fat body. In the adult, majority of expression is restricted to the ovaries, with low levels in the head and carcass of both sexes.

The protein resides in the endoplasmic reticulum membrane. Its subcellular location is the microsome membrane. It carries out the reaction 2,22,25-trideoxyecdysone + 2 reduced [adrenodoxin] + O2 + 2 H(+) = 2,22-dideoxyecdysone + 2 oxidized [adrenodoxin] + H2O. Its pathway is steroid biosynthesis; ecdysteroid biosynthesis. In terms of biological role, involved in the metabolism of insect hormones; responsible for ecdysteroid C25-hydroxylase activity. May be involved in the breakdown of synthetic insecticides. This is Cytochrome P450 306a1 from Drosophila melanogaster (Fruit fly).